Consider the following 194-residue polypeptide: Putative 3-methyladenine DNA glycosylase (194 aa).

The protein belongs to the DNA glycosylase MPG family.

This is Putative 3-methyladenine DNA glycosylase from Aeropyrum pernix (strain ATCC 700893 / DSM 11879 / JCM 9820 / NBRC 100138 / K1).